The chain runs to 1166 residues: DNA-directed RNA polymerase I subunit RPA2 (1166 aa).

The C4-type zinc-finger motif lies at 1081-1130; it reads CQNCGSILSCYVNRAIMKTQTFIPPSLDESNKDTEDKEIHMNEKVICKVC.

The protein belongs to the RNA polymerase beta chain family. As to quaternary structure, component of the RNA polymerase I (Pol I) complex consisting of at least 13 subunits.

It is found in the nucleus. The protein localises to the nucleolus. The catalysed reaction is RNA(n) + a ribonucleoside 5'-triphosphate = RNA(n+1) + diphosphate. Functionally, DNA-dependent RNA polymerase catalyzes the transcription of DNA into RNA using the four ribonucleoside triphosphates as substrates. Second largest core component of RNA polymerase I which synthesizes ribosomal RNA precursors. Proposed to contribute to the polymerase catalytic activity and forms the polymerase active center together with the largest subunit. Pol I is composed of mobile elements and RPA2 is part of the core element with the central large cleft and probably a clamp element that moves to open and close the cleft. The chain is DNA-directed RNA polymerase I subunit RPA2 (RPA2) from Euplotoides octocarinatus (Freshwater ciliate).